A 233-amino-acid chain; its full sequence is uncharacterized protein (233 aa).

Residues 21–43 are disordered; it reads RWRTATSADHPRRGRPAAQAVRR.

This is an uncharacterized protein from Mycobacterium tuberculosis (strain CDC 1551 / Oshkosh).